The primary structure comprises 334 residues: UDP-N-acetylglucosamine--N-acetylmuramyl-(pentapeptide) pyrophosphoryl-undecaprenol N-acetylglucosamine transferase (334 aa).

UDP-N-acetyl-alpha-D-glucosamine-binding positions include 11–13 (TGG), asparagine 125, serine 185, isoleucine 229, and glutamine 274.

This sequence belongs to the glycosyltransferase 28 family. MurG subfamily.

Its subcellular location is the cell inner membrane. It carries out the reaction di-trans,octa-cis-undecaprenyl diphospho-N-acetyl-alpha-D-muramoyl-L-alanyl-D-glutamyl-meso-2,6-diaminopimeloyl-D-alanyl-D-alanine + UDP-N-acetyl-alpha-D-glucosamine = di-trans,octa-cis-undecaprenyl diphospho-[N-acetyl-alpha-D-glucosaminyl-(1-&gt;4)]-N-acetyl-alpha-D-muramoyl-L-alanyl-D-glutamyl-meso-2,6-diaminopimeloyl-D-alanyl-D-alanine + UDP + H(+). The protein operates within cell wall biogenesis; peptidoglycan biosynthesis. Cell wall formation. Catalyzes the transfer of a GlcNAc subunit on undecaprenyl-pyrophosphoryl-MurNAc-pentapeptide (lipid intermediate I) to form undecaprenyl-pyrophosphoryl-MurNAc-(pentapeptide)GlcNAc (lipid intermediate II). This Thermosipho melanesiensis (strain DSM 12029 / CIP 104789 / BI429) protein is UDP-N-acetylglucosamine--N-acetylmuramyl-(pentapeptide) pyrophosphoryl-undecaprenol N-acetylglucosamine transferase.